A 111-amino-acid polypeptide reads, in one-letter code: Large ribosomal subunit protein uL22 (111 aa).

This sequence belongs to the universal ribosomal protein uL22 family. Part of the 50S ribosomal subunit.

This protein binds specifically to 23S rRNA; its binding is stimulated by other ribosomal proteins, e.g. L4, L17, and L20. It is important during the early stages of 50S assembly. It makes multiple contacts with different domains of the 23S rRNA in the assembled 50S subunit and ribosome. Functionally, the globular domain of the protein is located near the polypeptide exit tunnel on the outside of the subunit, while an extended beta-hairpin is found that lines the wall of the exit tunnel in the center of the 70S ribosome. The polypeptide is Large ribosomal subunit protein uL22 (Clostridium novyi (strain NT)).